Reading from the N-terminus, the 63-residue chain is Large ribosomal subunit protein bL28 (63 aa).

It belongs to the bacterial ribosomal protein bL28 family.

This is Large ribosomal subunit protein bL28 from Acidobacterium capsulatum (strain ATCC 51196 / DSM 11244 / BCRC 80197 / JCM 7670 / NBRC 15755 / NCIMB 13165 / 161).